We begin with the raw amino-acid sequence, 502 residues long: ATP synthase subunit alpha, chloroplastic (502 aa).

170-177 (GDRQTGKT) is a binding site for ATP.

It belongs to the ATPase alpha/beta chains family. In terms of assembly, F-type ATPases have 2 components, CF(1) - the catalytic core - and CF(0) - the membrane proton channel. CF(1) has five subunits: alpha(3), beta(3), gamma(1), delta(1), epsilon(1). CF(0) has four main subunits: a, b, b' and c.

The protein localises to the plastid. It localises to the chloroplast thylakoid membrane. It catalyses the reaction ATP + H2O + 4 H(+)(in) = ADP + phosphate + 5 H(+)(out). Its function is as follows. Produces ATP from ADP in the presence of a proton gradient across the membrane. The alpha chain is a regulatory subunit. This Rhodomonas salina (Cryptomonas salina) protein is ATP synthase subunit alpha, chloroplastic.